A 420-amino-acid chain; its full sequence is Deoxyribodipyrimidine photo-lyase (420 aa).

Residues 2–124 form the Photolyase/cryptochrome alpha/beta domain; the sequence is GPLLVWHRGD…PLHLLPAPHL (123 aa). A disordered region spans residues 147–176; it reads APPLPPPEALPKGPEEGEIPREDPGLPLPE. Residues 159–170 are compositionally biased toward basic and acidic residues; that stretch reads GPEEGEIPREDP. Tyrosine 197 provides a ligand contact to FAD. DNA is bound at residue arginine 201. Residues 209-213, tryptophan 241, arginine 248, asparagine 310, and 341-343 each bind FAD; these read GSRLS and DGD. Interaction with DNA regions lie at residues 244–251 and 310–311; these read ELLWRDFS and NR. Glutamine 373 serves as a coordination point for DNA.

Belongs to the DNA photolyase class-1 family. Monomer. FAD serves as cofactor.

It carries out the reaction cyclobutadipyrimidine (in DNA) = 2 pyrimidine residues (in DNA).. Functionally, involved in repair of UV radiation-induced DNA damage. Catalyzes the light-dependent monomerization (300-600 nm) of cyclobutyl pyrimidine dimers (in cis-syn configuration), which are formed between adjacent bases on the same DNA strand upon exposure to ultraviolet radiation. In Thermus thermophilus (strain ATCC 27634 / DSM 579 / HB8), this protein is Deoxyribodipyrimidine photo-lyase (phr).